We begin with the raw amino-acid sequence, 355 residues long: Protein-glutamate methylesterase/protein-glutamine glutaminase (355 aa).

Residues 3-121 (NVLVVEDSPV…HPDHEATARK (119 aa)) form the Response regulatory domain. D54 carries the 4-aspartylphosphate modification. One can recognise a CheB-type methylesterase domain in the interval 154–348 (PLLNRVAPAR…AALTNLVAER (195 aa)). Catalysis depends on residues S170, H197, and D290.

This sequence belongs to the CheB family. In terms of processing, phosphorylated by CheA. Phosphorylation of the N-terminal regulatory domain activates the methylesterase activity.

Its subcellular location is the cytoplasm. It carries out the reaction [protein]-L-glutamate 5-O-methyl ester + H2O = L-glutamyl-[protein] + methanol + H(+). The catalysed reaction is L-glutaminyl-[protein] + H2O = L-glutamyl-[protein] + NH4(+). Its function is as follows. Involved in chemotaxis. Part of a chemotaxis signal transduction system that modulates chemotaxis in response to various stimuli. Catalyzes the demethylation of specific methylglutamate residues introduced into the chemoreceptors (methyl-accepting chemotaxis proteins or MCP) by CheR. Also mediates the irreversible deamidation of specific glutamine residues to glutamic acid. The protein is Protein-glutamate methylesterase/protein-glutamine glutaminase of Nitrosospira multiformis (strain ATCC 25196 / NCIMB 11849 / C 71).